The following is a 215-amino-acid chain: Pyridoxine/pyridoxamine 5'-phosphate oxidase (215 aa).

Substrate is bound by residues 9 to 12 (RRDY) and Lys-69. FMN-binding positions include 64-69 (RVLLLK), 79-80 (FT), Lys-86, and Gln-108. Substrate is bound by residues Tyr-126, Arg-130, and Ser-134. FMN contacts are provided by residues 143 to 144 (QS) and Trp-188. Position 194-196 (194-196 (RLH)) interacts with substrate. Residue Arg-198 coordinates FMN.

Belongs to the pyridoxamine 5'-phosphate oxidase family. In terms of assembly, homodimer. FMN is required as a cofactor.

It carries out the reaction pyridoxamine 5'-phosphate + O2 + H2O = pyridoxal 5'-phosphate + H2O2 + NH4(+). The enzyme catalyses pyridoxine 5'-phosphate + O2 = pyridoxal 5'-phosphate + H2O2. Its pathway is cofactor metabolism; pyridoxal 5'-phosphate salvage; pyridoxal 5'-phosphate from pyridoxamine 5'-phosphate: step 1/1. The protein operates within cofactor metabolism; pyridoxal 5'-phosphate salvage; pyridoxal 5'-phosphate from pyridoxine 5'-phosphate: step 1/1. Its function is as follows. Catalyzes the oxidation of either pyridoxine 5'-phosphate (PNP) or pyridoxamine 5'-phosphate (PMP) into pyridoxal 5'-phosphate (PLP). The polypeptide is Pyridoxine/pyridoxamine 5'-phosphate oxidase (Pseudomonas entomophila (strain L48)).